The following is a 445-amino-acid chain: MSIFIGQLIGFAVIVFILVKWVVPPIKGLMQKQQEAVRVALAESAEAGKKLADADAMHAKAVEDAKAAGAKVTEEAQQDSQRITAQLAEQADAEAERIKAQGAQQVQLMRQQLIRQLRSGLGSESVQKAEEIVRNYVSDPAAQASTVDRFLDELDAMAPSSAVLEAGASLNLRAASREALAELVKKFESVAESADTAALATLADNLSAVARLLLTSATLDKHLAEPTGDSAAKVRLLERLFGGKVDDNTMDLLKTAVAQRWSTEGNLIDAVEHVARLALLVRAEREGQSEEVEDQLFRFGRVLDAQSQLSRLLADPVIPADKRVALLKKVLDSGGGVNPIAEALLTQTVELIRGASADDAVNDLAELAVARRGEAVAQVTAAADLSDAQRTRLTEVLSRIYGTPVSIQLEVDPEVLGGLLITVGDEVIDGSISSRLAAARTGLPD.

Residues 1–168 (MSIFIGQLIG…PSSAVLEAGA (168 aa)) are ATP synthase subunit b. A helical membrane pass occupies residues 3-23 (IFIGQLIGFAVIVFILVKWVV). The tract at residues 169–445 (SLNLRAASRE…LAAARTGLPD (277 aa)) is ATP synthase subunit delta.

It in the N-terminal section; belongs to the ATPase B chain family. This sequence in the C-terminal section; belongs to the ATPase delta chain family. In terms of assembly, F-type ATPases have 2 components, F(1) - the catalytic core - and F(0) - the membrane proton channel. F(1) has five subunits: alpha(3), beta(3), gamma(1), delta(1), epsilon(1). F(0) has three main subunits: a(1), b(2) and c(10-14). The alpha and beta chains form an alternating ring which encloses part of the gamma chain. F(1) is attached to F(0) by a central stalk formed by the gamma and epsilon chains, while a peripheral stalk is formed by the delta and b chains.

The protein localises to the cell membrane. Its function is as follows. F(1)F(0) ATP synthase produces ATP from ADP in the presence of a proton or sodium gradient. F-type ATPases consist of two structural domains, F(1) containing the extramembraneous catalytic core and F(0) containing the membrane proton channel, linked together by a central stalk and a peripheral stalk. During catalysis, ATP synthesis in the catalytic domain of F(1) is coupled via a rotary mechanism of the central stalk subunits to proton translocation. In terms of biological role, this fusion protein includes a component of the F(0) channel (subunit b) and of the F(1) subunit (subunit delta). Two copies of subunit b and one of delta together form the peripheral 'stator' stalk which links F(1) to F(0). The sequence is that of ATP synthase subunit b-delta (atpFH) from Mycolicibacterium vanbaalenii (strain DSM 7251 / JCM 13017 / BCRC 16820 / KCTC 9966 / NRRL B-24157 / PYR-1) (Mycobacterium vanbaalenii).